The primary structure comprises 984 residues: Serine/threonine-protein kinase Nek9 (984 aa).

N-acetylserine is present on serine 2. Serine 2, serine 13, serine 16, and serine 20 each carry phosphoserine. The segment at 14–43 (INSDFGSESGGGGDSGPGPSAVPGPRAGGG) is disordered. Position 52 is a phosphotyrosine (tyrosine 52). Residues 52–308 (YIPIRVLGRG…ADALLDLPLL (257 aa)) form the Protein kinase domain. Residue 58-66 (LGRGAFGEA) participates in ATP binding. Serine 76 carries the phosphoserine modification. Lysine 81 provides a ligand contact to ATP. Catalysis depends on aspartate 176, which acts as the Proton acceptor. Position 210 is a phosphothreonine; by autocatalysis (threonine 210). Phosphothreonine is present on threonine 254. Phosphoserine is present on serine 331. Threonine 333 is subject to Phosphothreonine. 6 RCC1 repeats span residues 388–444 (KELY…VTDE), 445–498 (GQLY…LTRN), 499–550 (KEVY…LTQS), 551–615 (GKVL…IDER), 616–668 (GRLL…ATDD), and 669–726 (NHIF…IVEK). Residues 732 to 896 (TIRSNSSGLS…GKALTSAACA (165 aa)) are interaction with NEK6. Phosphoserine is present on serine 741. The segment at 744–790 (TVVQSSSPGGGIGGGGGGGGGGGGEEEDSQQESETPDPSGGFRGTME) is disordered. Positions 751 to 766 (PGGGIGGGGGGGGGGG) are enriched in gly residues. Residues 767-778 (GEEEDSQQESET) show a composition bias toward acidic residues. Phosphoserine occurs at positions 808 and 839. Threonine 891 carries the phosphothreonine modification. The stretch at 896-945 (ACSALQVEVDRLQALVLKCLEEQQKLQQENLQMFTQLQKLNKKLEGGQQV) forms a coiled coil. Residues 940–984 (EGGQQVGMHSRGTQTAKEEMEMDPKPDLDSESWCLLGTDSCRPSL) form a disordered region. At serine 949 the chain carries Phosphoserine. Residues 955–967 (AKEEMEMDPKPDL) show a composition bias toward basic and acidic residues. Residue serine 983 is modified to Phosphoserine.

The protein belongs to the protein kinase superfamily. NEK Ser/Thr protein kinase family. NIMA subfamily. Homodimer; homodimerization is required to activate NEK7. Binds to Ran GTPase. Has a greater affinity for Ran-GDP over Ran-GTP. Interacts with SSRP1 and SUPT16H, the 2 subunits of the FACT complex. Interacts with DYNLL1; phosphorylation at Ser-949 strongly reduces DYNLL1 binding. It depends on Mg(2+) as a cofactor. Post-translationally, autophosphorylated on serine and threonine residues. When complexed with FACT, exhibits markedly elevated phosphorylation on Thr-210. During mitosis, not phosphorylated on Thr-210. Phosphorylated by CDK1 in vitro.

Its subcellular location is the cytoplasm. It is found in the nucleus. The enzyme catalyses L-seryl-[protein] + ATP = O-phospho-L-seryl-[protein] + ADP + H(+). The catalysed reaction is L-threonyl-[protein] + ATP = O-phospho-L-threonyl-[protein] + ADP + H(+). With respect to regulation, activated during mitosis by intramolecular autophosphorylation. Activity and autophosphorylation is activated by manganese &gt;&gt; magnesium ions. It is not cell-cycle regulated but activity is higher in G0-arrested cells. Its function is as follows. Pleiotropic regulator of mitotic progression, participating in the control of spindle dynamics and chromosome separation. Phosphorylates different histones, myelin basic protein, beta-casein, and BICD2. Phosphorylates histone H3 on serine and threonine residues and beta-casein on serine residues. Important for G1/S transition and S phase progression. Phosphorylates NEK6 and NEK7 and stimulates their activity by releasing the autoinhibitory functions of Tyr-108 and Tyr-97 respectively. In Mus musculus (Mouse), this protein is Serine/threonine-protein kinase Nek9.